We begin with the raw amino-acid sequence, 207 residues long: Peptidyl-tRNA hydrolase (207 aa).

Tyrosine 19 contacts tRNA. The active-site Proton acceptor is histidine 24. Phenylalanine 70, asparagine 72, and asparagine 118 together coordinate tRNA.

The protein belongs to the PTH family. Monomer.

The protein localises to the cytoplasm. It catalyses the reaction an N-acyl-L-alpha-aminoacyl-tRNA + H2O = an N-acyl-L-amino acid + a tRNA + H(+). Its function is as follows. Hydrolyzes ribosome-free peptidyl-tRNAs (with 1 or more amino acids incorporated), which drop off the ribosome during protein synthesis, or as a result of ribosome stalling. Catalyzes the release of premature peptidyl moieties from peptidyl-tRNA molecules trapped in stalled 50S ribosomal subunits, and thus maintains levels of free tRNAs and 50S ribosomes. This Synechococcus sp. (strain CC9311) protein is Peptidyl-tRNA hydrolase.